Consider the following 220-residue polypeptide: RNA polymerase sigma GP28 factor (220 aa).

Its function is as follows. Sigma factors are initiation factors that promote the attachment of RNA polymerase to specific initiation sites and are then released. This sigma factor is responsible for the expression of the phage middle genes. This Bacillus subtilis (Bacteriophage SP01) protein is RNA polymerase sigma GP28 factor (28).